The sequence spans 266 residues: Putative deoxyribonuclease tatdn3 (266 aa).

Positions 9, 11, 103, 143, 166, and 214 each coordinate Zn(2+).

Belongs to the metallo-dependent hydrolases superfamily. TatD-type hydrolase family. The cofactor is Mn(2+). Requires Ca(2+) as cofactor. Mg(2+) is required as a cofactor. It depends on Zn(2+) as a cofactor.

The protein resides in the nucleus. With respect to regulation, the 3'-exonuclease activity is sensitive to the metal ion present in the active site, whereas the AP endodeoxyribonuclease activity is observed in a variety of divalent metal cofactors. 3'-exoxonuclease activity is suppressed in the presence of Ca(2+), Zn(2+) and Ni(2+). Exhibits 3'-exonuclease activities and apurinic/apyrimidinic (AP) endonuclease (in vitro). Show preferential AP endonuclease activity on double-stranded DNA substrates and 3'- exonuclease activity on single-stranded DNA. This Danio rerio (Zebrafish) protein is Putative deoxyribonuclease tatdn3 (tatdn3).